Consider the following 174-residue polypeptide: NADH-ubiquinone oxidoreductase chain 6 (174 aa).

Helical transmembrane passes span 1–21 (MTYA…GFSS), 24–44 (SPIY…AVIL), 47–67 (GGGY…MVVF), 86–106 (VEVL…VLWV), 111–131 (GVVV…EGEG), and 151–171 (WLVV…IEIA).

Belongs to the complex I subunit 6 family. In terms of assembly, core subunit of respiratory chain NADH dehydrogenase (Complex I) which is composed of 45 different subunits.

It is found in the mitochondrion inner membrane. It catalyses the reaction a ubiquinone + NADH + 5 H(+)(in) = a ubiquinol + NAD(+) + 4 H(+)(out). Functionally, core subunit of the mitochondrial membrane respiratory chain NADH dehydrogenase (Complex I) which catalyzes electron transfer from NADH through the respiratory chain, using ubiquinone as an electron acceptor. Essential for the catalytic activity and assembly of complex I. The sequence is that of NADH-ubiquinone oxidoreductase chain 6 (MT-ND6) from Pongo abelii (Sumatran orangutan).